Reading from the N-terminus, the 129-residue chain is Phosphoribosyl-AMP cyclohydrolase (129 aa).

D85 is a Mg(2+) binding site. C86 serves as a coordination point for Zn(2+). Mg(2+) contacts are provided by D87 and D89. 2 residues coordinate Zn(2+): C102 and C109.

Belongs to the PRA-CH family. Homodimer. Mg(2+) serves as cofactor. The cofactor is Zn(2+).

Its subcellular location is the cytoplasm. The catalysed reaction is 1-(5-phospho-beta-D-ribosyl)-5'-AMP + H2O = 1-(5-phospho-beta-D-ribosyl)-5-[(5-phospho-beta-D-ribosylamino)methylideneamino]imidazole-4-carboxamide. Its pathway is amino-acid biosynthesis; L-histidine biosynthesis; L-histidine from 5-phospho-alpha-D-ribose 1-diphosphate: step 3/9. Its function is as follows. Catalyzes the hydrolysis of the adenine ring of phosphoribosyl-AMP. This Methanococcus maripaludis (strain C6 / ATCC BAA-1332) protein is Phosphoribosyl-AMP cyclohydrolase.